Consider the following 404-residue polypeptide: S-adenosylmethionine synthase (404 aa).

An ATP-binding site is contributed by H18. Residue D20 coordinates Mg(2+). E46 serves as a coordination point for K(+). The L-methionine site is built by E59 and Q102. Positions 102-112 (QSPDIAQGVDT) are flexible loop. ATP contacts are provided by residues 177–179 (DGK), 249–250 (KF), D258, 264–265 (RK), A281, and K285. D258 lines the L-methionine pocket. K289 serves as a coordination point for L-methionine.

This sequence belongs to the AdoMet synthase family. In terms of assembly, homotetramer; dimer of dimers. The cofactor is Mg(2+). Requires K(+) as cofactor.

The protein resides in the cytoplasm. It carries out the reaction L-methionine + ATP + H2O = S-adenosyl-L-methionine + phosphate + diphosphate. The protein operates within amino-acid biosynthesis; S-adenosyl-L-methionine biosynthesis; S-adenosyl-L-methionine from L-methionine: step 1/1. Its function is as follows. Catalyzes the formation of S-adenosylmethionine (AdoMet) from methionine and ATP. The overall synthetic reaction is composed of two sequential steps, AdoMet formation and the subsequent tripolyphosphate hydrolysis which occurs prior to release of AdoMet from the enzyme. The polypeptide is S-adenosylmethionine synthase (Nocardia farcinica (strain IFM 10152)).